Here is a 237-residue protein sequence, read N- to C-terminus: Neural retina-specific leucine zipper protein (237 aa).

Residues Lys-20 and Lys-24 each participate in a glycyl lysine isopeptide (Lys-Gly) (interchain with G-Cter in SUMO) cross-link. The interval 26–64 (EPSEGRSGVPTASLGSTPYSSVPPSPTFSEPGMVGGGEA) is disordered. The interval 30-93 (GRSGVPTASL…SDEVLGLSPD (64 aa)) is minimal transactivation domain (MTD). Residues 159 to 185 (RLKQRRRTLKNRGYAQACRSKRLQQRR) are basic motif. In terms of domain architecture, bZIP spans 159 to 222 (RLKQRRRTLK…DLYKARCDRL (64 aa)). The interval 187–208 (LEAERARLAAQLDALRAEVARL) is leucine-zipper.

It belongs to the bZIP family. Interacts with FIZ1; this interaction represses transactivation. Interacts (via the leucine-zipper domain) with CRX. Disumoylated at Lys-20. Sumoylation modulates the transcriptional activity of NRL on RHO and NR2E3 promoters, and is required for normal rod differentiation. Post-translationally, phosphorylated. Expressed in the retina (at protein level).

The protein localises to the cytoplasm. It localises to the nucleus. Functionally, acts as a transcriptional activator which regulates the expression of several rod-specific genes, including RHO and PDE6B. Also functions as a transcriptional coactivator, stimulating transcription mediated by the transcription factor CRX and NR2E3. Binds to the rhodopsin promoter in a sequence-specific manner. The sequence is that of Neural retina-specific leucine zipper protein (Nrl) from Mus musculus (Mouse).